The primary structure comprises 86 residues: Large ribosomal subunit protein bL27 (86 aa).

The interval 1–24 (MAHKKGTGSTRNGRDSNSKRLGVK) is disordered.

This sequence belongs to the bacterial ribosomal protein bL27 family.

This is Large ribosomal subunit protein bL27 from Prochlorococcus marinus (strain AS9601).